A 147-amino-acid chain; its full sequence is Large ribosomal subunit protein uL13 (147 aa).

Belongs to the universal ribosomal protein uL13 family. As to quaternary structure, part of the 50S ribosomal subunit.

Functionally, this protein is one of the early assembly proteins of the 50S ribosomal subunit, although it is not seen to bind rRNA by itself. It is important during the early stages of 50S assembly. In Deinococcus geothermalis (strain DSM 11300 / CIP 105573 / AG-3a), this protein is Large ribosomal subunit protein uL13.